Consider the following 105-residue polypeptide: uncharacterized protein (105 aa).

A disordered region spans residues 81–105; the sequence is NNNNKTITVDNNNNNNNNNNNNNNK.

This is an uncharacterized protein from Dictyostelium discoideum (Social amoeba).